The following is a 192-amino-acid chain: Der GTPase-activating protein YihI (192 aa).

Residues 1 to 80 (MSRTKKTRRI…KAAVKEVKDP (80 aa)) are disordered. Basic and acidic residues-rich tracts occupy residues 9 to 25 (RITDIMPARKADKKPEQ), 37 to 48 (TRYELDAKAREE), and 65 to 80 (DPAEQKKAAVKEVKDP).

It belongs to the YihI family. In terms of assembly, interacts with Der.

Functionally, a GTPase-activating protein (GAP) that modifies Der/EngA GTPase function. May play a role in ribosome biogenesis. This is Der GTPase-activating protein YihI from Actinobacillus pleuropneumoniae serotype 7 (strain AP76).